A 388-amino-acid chain; its full sequence is Alanine racemase (388 aa).

Lysine 44 (proton acceptor; specific for D-alanine) is an active-site residue. Lysine 44 carries the N6-(pyridoxal phosphate)lysine modification. Arginine 142 is a substrate binding site. The Proton acceptor; specific for L-alanine role is filled by tyrosine 273. Methionine 321 is a binding site for substrate.

It belongs to the alanine racemase family. Pyridoxal 5'-phosphate is required as a cofactor.

The enzyme catalyses L-alanine = D-alanine. Its pathway is amino-acid biosynthesis; D-alanine biosynthesis; D-alanine from L-alanine: step 1/1. Its function is as follows. Catalyzes the interconversion of L-alanine and D-alanine. May also act on other amino acids. This Mycobacterium ulcerans (strain Agy99) protein is Alanine racemase (alr).